The following is a 43-amino-acid chain: Omega-ctenitoxin-Pr1a (43 aa).

Cystine bridges form between cysteine 2–cysteine 17, cysteine 9–cysteine 22, cysteine 16–cysteine 33, and cysteine 24–cysteine 31. Glycine 43 bears the Glycine amide mark.

Expressed by the venom gland.

It is found in the secreted. In terms of biological role, inhibits high-voltage activated calcium channels. Shifts the voltage-dependence for activation towards hyperpolarized membrane potentials for L- (Cav1), P/Q- (Cav2.1/CACNA1A) and R-type (Cav2.3/CACNA1E) calcium currents. Causes immediate agitation and clockwise gyration, followed by the gradual development of general flaccid paralysis when injected intracerebroventricular into mice at dose levels of 5 ug per mouse. This is Omega-ctenitoxin-Pr1a from Phoneutria reidyi (Brazilian Amazonian armed spider).